A 577-amino-acid polypeptide reads, in one-letter code: Nuclear receptor subfamily 4 group A member 1 (577 aa).

The segment at residues 243–318 (EGRCAVCGDN…VGMVKEVVRT (76 aa)) is a DNA-binding region (nuclear receptor). NR C4-type zinc fingers lie at residues 246–266 (CAVCGDNASCQHYGVRTCEGC) and 282–311 (CLANKDCPVDKRRRNRCQFCRFQKCLVVGM). The tract at residues 247–333 (AVCGDNASCQ…RRGRLPSKPK (87 aa)) is required for binding NBRE-containing DNA. Residues 339–574 (SPVDLINSLV…PIVDKIFMDT (236 aa)) form the NR LBD domain. Positions 500 to 523 (PKKVEELQSQIINCLKEHIPSSMN) are may bind lipopolysaccharide. Residues 563–574 (PPPIVDKIFMDT) form an AF-2 region.

The protein belongs to the nuclear hormone receptor family. NR4 subfamily. Zn(2+) serves as cofactor.

The protein resides in the nucleus. It is found in the cytoplasm. The protein localises to the cytosol. Its function is as follows. Orphan nuclear receptor. Binds the NGFI-B response element (NBRE) 5'-AAAAGGTCA-3'. In terms of biological role, in the cytosol, may detect bacterial lipopolysaccharide (LPS) and NBRE-containing mitochondrial DNA released during pyroptosis, and play a role in non-canonical inflammasome activation. This Xenopus laevis (African clawed frog) protein is Nuclear receptor subfamily 4 group A member 1 (nr4a1).